Reading from the N-terminus, the 102-residue chain is Small ribosomal subunit protein uS10 (102 aa).

It belongs to the universal ribosomal protein uS10 family. As to quaternary structure, part of the 30S ribosomal subunit.

Functionally, involved in the binding of tRNA to the ribosomes. The polypeptide is Small ribosomal subunit protein uS10 (Methanosphaerula palustris (strain ATCC BAA-1556 / DSM 19958 / E1-9c)).